The primary structure comprises 930 residues: Nonribosomal peptide synthetase btyA (930 aa).

An adenylation (A) domain region spans residues 31–440 (ESPHRLTYAE…RGRSKELICI (410 aa)). Residues 570–647 (PAGNETETLL…VLARQLQDGH (78 aa)) enclose the Carrier domain. Position 607 is an O-(pantetheine 4'-phosphoryl)serine (Ser-607). The thioesterase (TE) domain stretch occupies residues 667-920 (PLWLIHPIGG…EDNVHKVYRV (254 aa)).

The protein belongs to the NRP synthetase family.

The enzyme catalyses 2 3-(4-hydroxyphenyl)pyruvate + H(+) = (2S)-2-(4-hydoxybenzyl)-3-(4-hydroxyphenyl)-2-furonol carboxylate + H2O. It participates in secondary metabolite biosynthesis. In terms of biological role, nonribosomal peptide synthetase; part of the gene cluster that mediates the biosynthesis of butyrolactones, natural products that show a wide range of biological activities such as antitumor, antiparasitic or anti-inflammatory activity. The nonribosomal peptide synthetase btyA is responsible for the production of butyrolactone II, the core structure of butyrolactones. BtyA first activates 4-hydroxyphenylpyruvate (HPPA) through its A domain to AMP-HPPA. The HPPA unit is then loaded to the T domain and eventually transferred to the TE domain. Upon loading of another HPPA unit to the T domain, the TE domain promotes the enolate formation on the unit attached. Then aldol condensation establishes the carbon-carbon bond between the two units, followed by ester cyclization, and keto-enol tautomerization to yield the gamma-butyrolactone core. Hydrolysis, and finally esterification of the exposed carboxylic acid group yields butyrolactone II. Two additional enzymes, a prenyltransferase and an epoxidase, may be involved in the tailoring modifications of butyrolactone II to give butyrolactone III and butyrolactone I. This chain is Nonribosomal peptide synthetase btyA, found in Aspergillus terreus (strain NIH 2624 / FGSC A1156).